The following is a 196-amino-acid chain: Cupin-domain-containing oxidoreductase srdD (196 aa).

The segment at 99-165 is cupin-like domain; sequence DFGPGVESPL…GNGTLPGRVM (67 aa).

This sequence belongs to the virC family.

Functionally, highly reducing polyketide synthase; part of the gene cluster that mediates the biosynthesis of sordarial, a salicylic aldehyde structurally related to the phytotoxin pyriculol. The most interesting aspect of this pathway is formation of an aromatic product from the highly reducing polyketide synthase srdA. SrdA synthesizes a reduced polyketide chain from one molecule of acetyl-CoA and five molecules of malonyl-CoA. The polyketide chain is then reductively released as an aldehyde. The oxidoreductases srdC, srdD and srdE then oxidize one of the hydroxy groups to facilitate the intramolecular aldol condensation, followed by dehydration to yield a salicylic aldehyde. This aldehyde can undergo facile reduction by endogenous reductases to yield the alcohol 1-hydroxy-2-hydroxymethyl-3-pent-1,3-dienylbenzene. The flavin-dependent srdI counteract against the propensity of the aldehydes to be reduced under physiological conditions and is responsible for reoxidizing 1-hydroxy-2-hydroxymethyl-3-pent-1,3-dienylbenzene back to the salicylic aldehyde. This salicylic aldehyde is then selectively epoxidized by the cupin-domain-containing oxidoreductase srdB to yield the epoxide, which can be hydrolyzed stereoselectively by the hydrolase srdG to give the final product sordarial. The chain is Cupin-domain-containing oxidoreductase srdD from Neurospora crassa (strain ATCC 24698 / 74-OR23-1A / CBS 708.71 / DSM 1257 / FGSC 987).